Consider the following 161-residue polypeptide: Kininogen-2 (161 aa).

The first 23 residues, 1–23 (MRLWFCLSFFVVLCLEHFPGTLA), serve as a signal peptide directing secretion. The cysteines at positions 150 and 156 are disulfide-linked. Val-160 carries the valine amide modification.

Belongs to the bradykinin-related peptide family. Expressed by the skin glands.

The protein localises to the secreted. Its function is as follows. Inhibits ACE with a Ki of 1.6 uM, and targets B2 bradykinin receptor (BDKRB2). Provokes contraction of smooth muscle preparation (ileum). In vivo, induces an early hyperalgesic effects in living rats after intraplantar injection. Inhibits the bradykinin-induced in vitro relaxation of rat arterial smooth muscle and constriction of intestinal smooth muscle. May target bradykinin receptors (BDKRB). The polypeptide is Kininogen-2 (Bombina orientalis (Oriental fire-bellied toad)).